A 534-amino-acid chain; its full sequence is Apolipoprotein N-acyltransferase (534 aa).

The next 7 membrane-spanning stretches (helical) occupy residues 18-38 (LLAI…GFFA), 39-59 (AMFL…ASPD), 74-94 (WLFG…ALLV), 105-125 (LAIL…VALA), 127-147 (IFWS…GLME), 178-198 (VIGA…PALA), and 209-229 (ALAV…LYVA). One can recognise a CN hydrolase domain in the interval 246-496 (VQPDIDQAAK…TGFIDATVDR (251 aa)). E291 acts as the Proton acceptor in catalysis. K355 is an active-site residue. C408 acts as the Nucleophile in catalysis. Residues 504–524 (TFPRQTYFWLTEALLILIALV) form a helical membrane-spanning segment.

The protein belongs to the CN hydrolase family. Apolipoprotein N-acyltransferase subfamily.

The protein resides in the cell inner membrane. The enzyme catalyses N-terminal S-1,2-diacyl-sn-glyceryl-L-cysteinyl-[lipoprotein] + a glycerophospholipid = N-acyl-S-1,2-diacyl-sn-glyceryl-L-cysteinyl-[lipoprotein] + a 2-acyl-sn-glycero-3-phospholipid + H(+). It functions in the pathway protein modification; lipoprotein biosynthesis (N-acyl transfer). Catalyzes the phospholipid dependent N-acylation of the N-terminal cysteine of apolipoprotein, the last step in lipoprotein maturation. In Rhizobium leguminosarum bv. trifolii (strain WSM2304), this protein is Apolipoprotein N-acyltransferase.